Here is a 260-residue protein sequence, read N- to C-terminus: MYFAVIGTHVRGKSASPAMHNASFKALGVNAVYIAVDVPREELPCFLKLARLNLRGFNVTIPHKEEVVKHLDGVAADARAIGAVNTVLVERNLLVGYNTDASAVYQLAGSHMRGADVLIVGAGGAARAALFAAIKAEARAVYIANRTYERAEALAREFAEKFKREVKAVRSPVKADVVVNATPVYDAMVADLSGASLYVDFAYIPTPRTKMVEEAQRLGIKVVDGVDLLVEQGAQAEKIWLGVEPDRTVMKRAVLEFLGI.

Shikimate contacts are provided by residues 14–16 and Thr-60; that span reads SAS. Lys-64 serves as the catalytic Proton acceptor. Shikimate is bound by residues Asn-85 and Asp-100. Residues 121 to 125, 145 to 150, and Phe-201 each bind NADP(+); these read GAGGA and NRTYER. A shikimate-binding site is contributed by Tyr-203. Gly-225 contacts NADP(+).

This sequence belongs to the shikimate dehydrogenase family. As to quaternary structure, homodimer.

The catalysed reaction is shikimate + NADP(+) = 3-dehydroshikimate + NADPH + H(+). It participates in metabolic intermediate biosynthesis; chorismate biosynthesis; chorismate from D-erythrose 4-phosphate and phosphoenolpyruvate: step 4/7. In terms of biological role, involved in the biosynthesis of the chorismate, which leads to the biosynthesis of aromatic amino acids. Catalyzes the reversible NADPH linked reduction of 3-dehydroshikimate (DHSA) to yield shikimate (SA). This chain is Shikimate dehydrogenase (NADP(+)), found in Pyrobaculum neutrophilum (strain DSM 2338 / JCM 9278 / NBRC 100436 / V24Sta) (Thermoproteus neutrophilus).